The chain runs to 161 residues: Globin CTT-VIIB-4 (161 aa).

The signal sequence occupies residues 1 to 16 (MKFFAVLALCIVGAIA). A Globin domain is found at 18–161 (PLTADEASLV…NTMAVAVAHL (144 aa)). Positions 76 and 111 each coordinate heme b.

Belongs to the globin family. As to quaternary structure, homodimer.

The chain is Globin CTT-VIIB-4 (CTT-7B4) from Chironomus thummi thummi (Midge).